The following is a 132-amino-acid chain: L-ectoine synthase (132 aa).

Belongs to the ectoine synthase family.

The catalysed reaction is (2S)-4-acetamido-2-aminobutanoate = L-ectoine + H2O. The protein operates within amine and polyamine biosynthesis; ectoine biosynthesis; L-ectoine from L-aspartate 4-semialdehyde: step 3/3. Functionally, catalyzes the circularization of gamma-N-acetyl-alpha,gamma-diaminobutyric acid (ADABA) to ectoine (1,4,5,6-tetrahydro-2-methyl-4-pyrimidine carboxylic acid), which is an excellent osmoprotectant. This Rhodococcus erythropolis (strain PR4 / NBRC 100887) protein is L-ectoine synthase.